A 340-amino-acid polypeptide reads, in one-letter code: Alcohol dehydrogenase (340 aa).

Zn(2+)-binding residues include cysteine 40 and histidine 63.

It belongs to the zinc-containing alcohol dehydrogenase family. The cofactor is Zn(2+).

It carries out the reaction a primary alcohol + NAD(+) = an aldehyde + NADH + H(+). The catalysed reaction is a secondary alcohol + NAD(+) = a ketone + NADH + H(+). This chain is Alcohol dehydrogenase (adhA), found in Rhizobium meliloti (strain 1021) (Ensifer meliloti).